A 223-amino-acid polypeptide reads, in one-letter code: MHFTQQQLQRLMLHYAGKIAKDRKEQKIKLNYNEALAYICYELMELARKNLSVSELMSIGKTLLTSEDVIDGVASMLDEIQIELPFEDGTKLVTIHEPIANDDKIKAGEIFLSSEFIVLNENKTSIEIKVSNKGDRPIQVGSHFHFFEVNRFLSFDREKAYGKRLNIASGTSVRFEPGEEKTVSLIEFGGLKKVLGFNNLCDDFINDENKTKALSKAKEKGFL.

A urease gamma region spans residues 1-101; it reads MHFTQQQLQR…LVTIHEPIAN (101 aa). Positions 102–223 are urease beta; the sequence is DDKIKAGEIF…LSKAKEKGFL (122 aa).

It in the N-terminal section; belongs to the urease gamma subunit family. This sequence in the C-terminal section; belongs to the urease beta subunit family. In terms of assembly, heterohexamer of 3 UreA (alpha) and 3 UreB (beta) subunits.

The protein localises to the cytoplasm. The enzyme catalyses urea + 2 H2O + H(+) = hydrogencarbonate + 2 NH4(+). It participates in nitrogen metabolism; urea degradation; CO(2) and NH(3) from urea (urease route): step 1/1. The protein is Urease subunit alpha of Campylobacter lari.